Here is a 530-residue protein sequence, read N- to C-terminus: FSD1-like protein (530 aa).

Position 1 is an N-acetylmethionine (Met1). Residues Lys102–Glu141 adopt a coiled-coil conformation. Residues Leu137–Leu194 enclose the COS domain. The 105-residue stretch at Val196 to Leu300 folds into the Fibronectin type-III domain. One can recognise a B30.2/SPRY domain in the interval Leu300–Ala506. The tract at residues Trp322 to Arg366 is disordered. Basic and acidic residues predominate over residues Gln330–Gly341. The span at Arg342 to Gly354 shows a compositional bias: polar residues. 2 positions are modified to phosphoserine: Ser520 and Ser523.

The protein is FSD1-like protein (FSD1L) of Homo sapiens (Human).